The sequence spans 101 residues: Small ribosomal subunit protein uS14 (101 aa).

The segment covering 1-10 (MAKKSAIEKN) has biased composition (basic and acidic residues). A disordered region spans residues 1–23 (MAKKSAIEKNNRRKKMTKNAAPK). The segment covering 11–23 (NRRKKMTKNAAPK) has biased composition (basic residues).

This sequence belongs to the universal ribosomal protein uS14 family. In terms of assembly, part of the 30S ribosomal subunit. Contacts proteins S3 and S10.

Functionally, binds 16S rRNA, required for the assembly of 30S particles and may also be responsible for determining the conformation of the 16S rRNA at the A site. This Rhodopseudomonas palustris (strain TIE-1) protein is Small ribosomal subunit protein uS14.